Here is a 413-residue protein sequence, read N- to C-terminus: NADPH dehydrogenase afvA (413 aa).

Residue 53–56 (APLC) coordinates FMN. Y58 lines the substrate pocket. FMN contacts are provided by A88 and Q130. 211-214 (HAAH) serves as a coordination point for substrate. Residues R264 and 370 to 371 (GR) each bind FMN.

Belongs to the NADH:flavin oxidoreductase/NADH oxidase family. NamA subfamily. The cofactor is FMN.

It carries out the reaction A + NADPH + H(+) = AH2 + NADP(+). It participates in secondary metabolite biosynthesis. Functionally, NADPH dehydrogenase; part of the gene cluster that mediates the biosynthesis of aflavarin, a bicoumarin that exhibits anti-insectan activity against the fungivorous beetle C.hemipterus. This chain is NADPH dehydrogenase afvA, found in Aspergillus flavus (strain ATCC 200026 / FGSC A1120 / IAM 13836 / NRRL 3357 / JCM 12722 / SRRC 167).